The sequence spans 693 residues: Elongation factor G (693 aa).

Residues 9 to 283 form the tr-type G domain; it reads ERVRNIGIIA…AVCDYLPSPV (275 aa). GTP contacts are provided by residues 18-25, 82-86, and 136-139; these read AHIDAGKT, DTPGH, and NKMD.

Belongs to the TRAFAC class translation factor GTPase superfamily. Classic translation factor GTPase family. EF-G/EF-2 subfamily.

It is found in the cytoplasm. Its function is as follows. Catalyzes the GTP-dependent ribosomal translocation step during translation elongation. During this step, the ribosome changes from the pre-translocational (PRE) to the post-translocational (POST) state as the newly formed A-site-bound peptidyl-tRNA and P-site-bound deacylated tRNA move to the P and E sites, respectively. Catalyzes the coordinated movement of the two tRNA molecules, the mRNA and conformational changes in the ribosome. The chain is Elongation factor G from Dehalococcoides mccartyi (strain ATCC BAA-2266 / KCTC 15142 / 195) (Dehalococcoides ethenogenes (strain 195)).